Here is a 371-residue protein sequence, read N- to C-terminus: Peptidyl-prolyl cis-trans isomerase D (371 aa).

In terms of domain architecture, PPIase cyclophilin-type spans 8–172 (FFDIAIGGQL…EPVVIADCGQ (165 aa)). Residues 175-202 (SDDPFLAERTSTDGDPYEDYPDDEDQEL) form a disordered region. Residues 189-201 (DPYEDYPDDEDQE) are compositionally biased toward acidic residues. TPR repeat units lie at residues 212 to 245 (AKTI…LDVH), 265 to 303 (APLL…LELS), and 308 to 341 (AKAY…LPED).

It belongs to the cyclophilin-type PPIase family. PPIase D subfamily.

The protein localises to the cytoplasm. It catalyses the reaction [protein]-peptidylproline (omega=180) = [protein]-peptidylproline (omega=0). Its function is as follows. PPIases accelerate the folding of proteins. It catalyzes the cis-trans isomerization of proline imidic peptide bonds in oligopeptides. The protein is Peptidyl-prolyl cis-trans isomerase D (Cyp40) of Amanita muscaria (Fly agaric).